The sequence spans 295 residues: Protoheme IX farnesyltransferase (295 aa).

A run of 9 helical transmembrane segments spans residues Ile-9–Ala-29, Phe-36–Phe-56, Leu-80–Leu-100, Leu-108–Leu-128, Gly-135–Thr-155, Leu-163–Phe-183, Ile-209–Ala-229, Gly-230–Lys-250, and Phe-265–Val-285.

The protein belongs to the UbiA prenyltransferase family. Protoheme IX farnesyltransferase subfamily.

The protein resides in the cell inner membrane. The enzyme catalyses heme b + (2E,6E)-farnesyl diphosphate + H2O = Fe(II)-heme o + diphosphate. The protein operates within porphyrin-containing compound metabolism; heme O biosynthesis; heme O from protoheme: step 1/1. Its function is as follows. Converts heme B (protoheme IX) to heme O by substitution of the vinyl group on carbon 2 of heme B porphyrin ring with a hydroxyethyl farnesyl side group. This Pseudomonas savastanoi pv. phaseolicola (strain 1448A / Race 6) (Pseudomonas syringae pv. phaseolicola (strain 1448A / Race 6)) protein is Protoheme IX farnesyltransferase.